We begin with the raw amino-acid sequence, 471 residues long: MTSQLAKKAEAWSARFNEPVSDLVKRYTASVFFDKRLALFDIQGSLAHAAMLAKQGIIAEADRAAIEQGMAQIRQEIEAGTFEWKLDLEDVHLNIEARLTAMAGDAGKRLHTGRSRNDQVATDIRLWLRSEIDNIVGLLKALRGALLDLAEQHTNTIVPGFTHLQVAQPVVFGHHLLAYVEMFTRDTERMLDARRRVNRLPLGAAALAGTSYPIDREFVAQQLGFEGVCRNSLDAVSDRDFAIEFCAAAALIMTHVSRFSEELVLWMSPRVGFIDIADRFCTGSSIMPQKKNPDVPELARGKTGRVNGHLIGLLTLMKGQPLAYNKDNQEDKEPLFDTVDTVVDTLRIFADMVPGITVKADAMRAAALQGYATATDLADYLVKRGLPFRDAHEAVAHAVRACDDLRCDLADLSVAQLRDICGLGDKANLIGDDVHTVLTLEGSVASRNHIGGTAPEQVKQAIAFARAALAE.

Belongs to the lyase 1 family. Argininosuccinate lyase subfamily.

The protein localises to the cytoplasm. The enzyme catalyses 2-(N(omega)-L-arginino)succinate = fumarate + L-arginine. It participates in amino-acid biosynthesis; L-arginine biosynthesis; L-arginine from L-ornithine and carbamoyl phosphate: step 3/3. This Ralstonia pickettii (strain 12J) protein is Argininosuccinate lyase.